Here is a 271-residue protein sequence, read N- to C-terminus: Enolase-phosphatase E1 (271 aa).

Mg(2+)-binding residues include Asp-16 and Glu-18. Substrate is bound by residues Ser-150–Ser-151 and Lys-199. Asp-226 lines the Mg(2+) pocket.

The protein belongs to the HAD-like hydrolase superfamily. MasA/MtnC family. As to quaternary structure, monomer. Mg(2+) serves as cofactor.

It localises to the cytoplasm. It is found in the nucleus. The catalysed reaction is 5-methylsulfanyl-2,3-dioxopentyl phosphate + H2O = 1,2-dihydroxy-5-(methylsulfanyl)pent-1-en-3-one + phosphate. Its pathway is amino-acid biosynthesis; L-methionine biosynthesis via salvage pathway; L-methionine from S-methyl-5-thio-alpha-D-ribose 1-phosphate: step 3/6. It participates in amino-acid biosynthesis; L-methionine biosynthesis via salvage pathway; L-methionine from S-methyl-5-thio-alpha-D-ribose 1-phosphate: step 4/6. Bifunctional enzyme that catalyzes the enolization of 2,3-diketo-5-methylthiopentyl-1-phosphate (DK-MTP-1-P) into the intermediate 2-hydroxy-3-keto-5-methylthiopentenyl-1-phosphate (HK-MTPenyl-1-P), which is then dephosphorylated to form the acireductone 1,2-dihydroxy-3-keto-5-methylthiopentene (DHK-MTPene). The protein is Enolase-phosphatase E1 of Candida dubliniensis (strain CD36 / ATCC MYA-646 / CBS 7987 / NCPF 3949 / NRRL Y-17841) (Yeast).